Reading from the N-terminus, the 492-residue chain is Protein nucleotidyltransferase YdiU (492 aa).

Glycine 88, glycine 90, arginine 91, lysine 111, aspartate 123, glycine 124, arginine 174, and arginine 181 together coordinate ATP. Aspartate 250 (proton acceptor) is an active-site residue. Mg(2+)-binding residues include asparagine 251 and aspartate 260. Aspartate 260 is a binding site for ATP.

Belongs to the SELO family. Requires Mg(2+) as cofactor. Mn(2+) is required as a cofactor.

The enzyme catalyses L-seryl-[protein] + ATP = 3-O-(5'-adenylyl)-L-seryl-[protein] + diphosphate. It catalyses the reaction L-threonyl-[protein] + ATP = 3-O-(5'-adenylyl)-L-threonyl-[protein] + diphosphate. It carries out the reaction L-tyrosyl-[protein] + ATP = O-(5'-adenylyl)-L-tyrosyl-[protein] + diphosphate. The catalysed reaction is L-histidyl-[protein] + UTP = N(tele)-(5'-uridylyl)-L-histidyl-[protein] + diphosphate. The enzyme catalyses L-seryl-[protein] + UTP = O-(5'-uridylyl)-L-seryl-[protein] + diphosphate. It catalyses the reaction L-tyrosyl-[protein] + UTP = O-(5'-uridylyl)-L-tyrosyl-[protein] + diphosphate. Nucleotidyltransferase involved in the post-translational modification of proteins. It can catalyze the addition of adenosine monophosphate (AMP) or uridine monophosphate (UMP) to a protein, resulting in modifications known as AMPylation and UMPylation. The polypeptide is Protein nucleotidyltransferase YdiU (Rhodopseudomonas palustris (strain HaA2)).